Consider the following 231-residue polypeptide: Quercetin 2,3-dioxygenase (231 aa).

Residues His57, His59, His101, and Glu103 each contribute to the a divalent metal cation site.

It belongs to the pirin family. The cofactor is Zn(2+). Co(2+) is required as a cofactor. It depends on Fe(2+) as a cofactor.

The catalysed reaction is quercetin + O2 = 2-(3,4-dihydroxybenzoyloxy)-4,6-dihydroxybenzoate + CO. It participates in flavonoid metabolism; quercetin degradation. Has quercetin 2,3-dioxygenase activity in vitro. Its physiological role is unknown; however, may provide a mechanism that would avoid inhibition of key cellular proteins, such as DNA gyrase, by quercetin. This Escherichia coli O157:H7 protein is Quercetin 2,3-dioxygenase (yhhW).